Here is a 143-residue protein sequence, read N- to C-terminus: Large ribosomal subunit protein uL11 (143 aa).

It belongs to the universal ribosomal protein uL11 family. In terms of assembly, part of the ribosomal stalk of the 50S ribosomal subunit. Interacts with L10 and the large rRNA to form the base of the stalk. L10 forms an elongated spine to which L12 dimers bind in a sequential fashion forming a multimeric L10(L12)X complex. In terms of processing, one or more lysine residues are methylated.

Forms part of the ribosomal stalk which helps the ribosome interact with GTP-bound translation factors. The polypeptide is Large ribosomal subunit protein uL11 (Polynucleobacter asymbioticus (strain DSM 18221 / CIP 109841 / QLW-P1DMWA-1) (Polynucleobacter necessarius subsp. asymbioticus)).